The chain runs to 388 residues: Succinate--CoA ligase [ADP-forming] subunit beta (388 aa).

ATP contacts are provided by residues K46, 53 to 55, E99, C102, and E107; that span reads GRG. Mg(2+) contacts are provided by N199 and D213. Residues N264 and 321–323 contribute to the substrate site; that span reads GIV.

This sequence belongs to the succinate/malate CoA ligase beta subunit family. In terms of assembly, heterotetramer of two alpha and two beta subunits. Mg(2+) serves as cofactor.

The catalysed reaction is succinate + ATP + CoA = succinyl-CoA + ADP + phosphate. It carries out the reaction GTP + succinate + CoA = succinyl-CoA + GDP + phosphate. It participates in carbohydrate metabolism; tricarboxylic acid cycle; succinate from succinyl-CoA (ligase route): step 1/1. Its function is as follows. Succinyl-CoA synthetase functions in the citric acid cycle (TCA), coupling the hydrolysis of succinyl-CoA to the synthesis of either ATP or GTP and thus represents the only step of substrate-level phosphorylation in the TCA. The beta subunit provides nucleotide specificity of the enzyme and binds the substrate succinate, while the binding sites for coenzyme A and phosphate are found in the alpha subunit. In Actinobacillus pleuropneumoniae serotype 5b (strain L20), this protein is Succinate--CoA ligase [ADP-forming] subunit beta.